We begin with the raw amino-acid sequence, 106 residues long: Nucleoid-associated protein DP1429 (106 aa).

The protein belongs to the YbaB/EbfC family. Homodimer.

The protein resides in the cytoplasm. The protein localises to the nucleoid. Functionally, binds to DNA and alters its conformation. May be involved in regulation of gene expression, nucleoid organization and DNA protection. In Desulfotalea psychrophila (strain LSv54 / DSM 12343), this protein is Nucleoid-associated protein DP1429.